Here is a 1254-residue protein sequence, read N- to C-terminus: SUN domain-containing ossification factor (1254 aa).

Residues 1-29 form the signal peptide; that stretch reads MKKHRRALALVSCLFLCSLVWLPSWRVCC. Disordered regions lie at residues 58-88, 118-270, and 282-304; these read KKDEREGPINAESLGKSGSNLPISPKEHKLK, EESS…DIPT, and EKEKSQSMHASSNGGSHATKKVQ. Over residues 130–145 the composition is skewed to low complexity; that stretch reads VENISSSSTSEITPIS. The span at 165–175 shows a compositional bias: acidic residues; sequence EQSETDCDVGE. Residues Asn202 and Asn236 are each glycosylated (N-linked (GlcNAc...) asparagine). The span at 241 to 253 shows a compositional bias: basic and acidic residues; it reads LKNESSDYTKPGD. An SUN domain is found at 284-453; sequence EKSQSMHASS…SLIRVFGTSM (170 aa). Positions 288-297 are enriched in polar residues; sequence SMHASSNGGS. Asn524 is a glycosylation site (N-linked (GlcNAc...) asparagine). Disordered stretches follow at residues 530 to 553, 583 to 605, and 759 to 788; these read NATATAAPKMPESTPVSTPVPSPE, EEEEEASPSTVTLLGSGEQEDES, and HIPSPVIPQESSVEIDNETEQKSESFSSIE. The segment covering 540 to 553 has biased composition (low complexity); it reads PESTPVSTPVPSPE. Positions 909-1009 form a coiled coil; the sequence is NQKESVFMRL…VAELKREVSD (101 aa). 2 N-linked (GlcNAc...) asparagine glycosylation sites follow: Asn928 and Asn955. The helical transmembrane segment at 1011–1031 threads the bilayer; the sequence is QSYLVISLVLCVVLGLMLCMQ. Position 1081 is a phosphoserine (Ser1081). Positions 1152–1172 are disordered; the sequence is EVYHSSYKGPPSEGSSETSSQ. Over residues 1163 to 1172 the composition is skewed to low complexity; that stretch reads SEGSSETSSQ.

Post-translationally, O-glycosylated. O-mannosylated by POMT1 and POMT2 and elongated by POMGNT1. N-glycosylated. In terms of tissue distribution, highly expressed in pancreas and testis and to a lower extent in prostate, ovary, heart, thymus, small intestine and spleen.

Its subcellular location is the rough endoplasmic reticulum membrane. Required for bone modeling during late embryogenesis. Regulates type I collagen synthesis in osteoblasts during their postnatal maturation. This is SUN domain-containing ossification factor (SUCO) from Homo sapiens (Human).